A 287-amino-acid polypeptide reads, in one-letter code: MDEIVKNIREGTHVLLPFYETLPELNLSLGKSPLPSLEYGANYFLQISRVNDLNRMPTDMLKLFTHDIMLPESDLDKVYEILKINSVKYYGRSTKADAVVADLSARNKLFKRERDAIKSNNHLTENNLYISDYKMLTFDVFRPLFDFVNEKYCIIKLPTLFGRGVIDTMRIYCSLFKNVRLLKCVSDSWLKDSAIMVASNVCKKNLDLFMSHVKSVTKSSSWKDVNSVQFSILNDPVDTEFINKFLEFSNRVYEALYYVHSLLYSSMTSDSKSIENKHQRRLVKLLL.

Belongs to the orthopoxvirus mRNA-capping enzyme regulatory subunit family. Interacts with the catalytic subunit OPG113.

It localises to the virion. Functionally, regulatory subunit of the mRNA cap enzyme which stabilizes the catalytic subunit and enhances its methyltransferase activity through an allosteric mechanism. Heterodimeric mRNA capping enzyme catalyzes the linkage of a N7-methyl-guanosine moiety to the first transcribed nucleotide (cap 0 structure), whereas the methyltransferase OPG102 is responsible for a second methylation at the 2'-O position of the ribose (cap 1 structure). Also involved in early viral gene transcription termination and intermediate viral gene transcription initiation. Early gene transcription termination requires the termination factor VTF, the DNA-dependent ATPase NPH-I/OPG123 and the RAP94/OPG109 subunit of the viral RNA polymerase, as well as the presence of a specific termination motif. Binds, together with RAP94/OPG109, to the termination motif 5'-UUUUUNU-3' in the nascent early mRNA. The polypeptide is mRNA-capping enzyme regulatory subunit OPG124 (OPG124) (Variola virus (isolate Human/India/Ind3/1967) (VARV)).